The sequence spans 575 residues: Membrane protein insertase YidC (575 aa).

Transmembrane regions (helical) follow at residues 6-26 (VFLIFAWLMVAALLWMEWGKD), 357-377 (FSIMAIIGQGLFWVLSHLHSF), 381-401 (WGWAIIGLVLLLRLALYPLSA), 448-468 (GGCLPLLIQMPIFFALYWVLV), 490-510 (PYFILPVLNIAIMWATQKLTP), and 526-546 (PLVFGVMMAFMPAGLVLYWVV).

Belongs to the OXA1/ALB3/YidC family. Type 1 subfamily. As to quaternary structure, interacts with the Sec translocase complex via SecD. Specifically interacts with transmembrane segments of nascent integral membrane proteins during membrane integration.

Its subcellular location is the cell inner membrane. Its function is as follows. Required for the insertion and/or proper folding and/or complex formation of integral membrane proteins into the membrane. Involved in integration of membrane proteins that insert both dependently and independently of the Sec translocase complex, as well as at least some lipoproteins. Aids folding of multispanning membrane proteins. This chain is Membrane protein insertase YidC, found in Xanthomonas campestris pv. campestris (strain B100).